Here is a 306-residue protein sequence, read N- to C-terminus: D-alanine--D-alanine ligase B (306 aa).

Catalysis depends on residues E15 and S150. Residues 101–303 form the ATP-grasp domain; it reads KLLWQGAGLP…FSQLVVRILE (203 aa). An ATP-binding site is contributed by 134–189; sequence ISALGLPVIVKPSREGSSVGMSKVVAENALQDALRLAFQHDEEVLIEKWLSGPEFT. D257, E270, and N272 together coordinate Mg(2+). S281 is a catalytic residue.

It belongs to the D-alanine--D-alanine ligase family. In terms of assembly, monomer. Mg(2+) is required as a cofactor. Requires Mn(2+) as cofactor.

The protein localises to the cytoplasm. It catalyses the reaction 2 D-alanine + ATP = D-alanyl-D-alanine + ADP + phosphate + H(+). Its pathway is cell wall biogenesis; peptidoglycan biosynthesis. Cell wall formation. This is D-alanine--D-alanine ligase B (ddlB) from Escherichia coli O157:H7.